A 525-amino-acid chain; its full sequence is Cytochrome P450 750A1 (525 aa).

A helical transmembrane segment spans residues 13–33; sequence PLPLPAILIATFIFFFSCWIL. C465 lines the heme pocket.

Belongs to the cytochrome P450 family. Heme serves as cofactor.

It is found in the membrane. The protein is Cytochrome P450 750A1 (CYP750A1) of Pinus taeda (Loblolly pine).